The following is an 83-amino-acid chain: Alpha-neurotoxin NTX-4 (83 aa).

Residues 1–21 (MKTLLLTLLVVTIVCLDLGYT) form the signal peptide. 4 disulfide bridges follow: Cys24/Cys45, Cys38/Cys62, Cys64/Cys75, and Cys76/Cys81.

It belongs to the three-finger toxin family. Short-chain subfamily. Type I alpha-neurotoxin sub-subfamily. Expressed by the venom gland.

It is found in the secreted. Functionally, binds to muscle nicotinic acetylcholine receptor (nAChR) and inhibit acetylcholine from binding to the receptor, thereby impairing neuromuscular transmission. The protein is Alpha-neurotoxin NTX-4 of Naja sputatrix (Malayan spitting cobra).